Here is a 552-residue protein sequence, read N- to C-terminus: Dihydroxy-acid dehydratase (552 aa).

A Mg(2+)-binding site is contributed by Asp-78. Position 119 (Cys-119) interacts with [2Fe-2S] cluster. Mg(2+)-binding residues include Asp-120 and Lys-121. N6-carboxylysine is present on Lys-121. Residue Cys-191 participates in [2Fe-2S] cluster binding. Glu-442 contacts Mg(2+). The active-site Proton acceptor is Ser-468.

Belongs to the IlvD/Edd family. As to quaternary structure, homodimer. [2Fe-2S] cluster is required as a cofactor. It depends on Mg(2+) as a cofactor.

It carries out the reaction (2R)-2,3-dihydroxy-3-methylbutanoate = 3-methyl-2-oxobutanoate + H2O. The enzyme catalyses (2R,3R)-2,3-dihydroxy-3-methylpentanoate = (S)-3-methyl-2-oxopentanoate + H2O. It functions in the pathway amino-acid biosynthesis; L-isoleucine biosynthesis; L-isoleucine from 2-oxobutanoate: step 3/4. Its pathway is amino-acid biosynthesis; L-valine biosynthesis; L-valine from pyruvate: step 3/4. Functions in the biosynthesis of branched-chain amino acids. Catalyzes the dehydration of (2R,3R)-2,3-dihydroxy-3-methylpentanoate (2,3-dihydroxy-3-methylvalerate) into 2-oxo-3-methylpentanoate (2-oxo-3-methylvalerate) and of (2R)-2,3-dihydroxy-3-methylbutanoate (2,3-dihydroxyisovalerate) into 2-oxo-3-methylbutanoate (2-oxoisovalerate), the penultimate precursor to L-isoleucine and L-valine, respectively. The sequence is that of Dihydroxy-acid dehydratase from Caldicellulosiruptor saccharolyticus (strain ATCC 43494 / DSM 8903 / Tp8T 6331).